The chain runs to 767 residues: Slo-interacting protein 1 (767 aa).

Residues 202 to 280 (QQSSTDTNKG…SVTLLVSRIL (79 aa)) enclose the PDZ domain. 2 disordered regions span residues 521–557 (GNAA…NPDE) and 744–767 (KEER…QQQQ). Over residues 532-555 (NSSSAYNTGDSNNSASPHQNTTNP) the composition is skewed to polar residues. The segment covering 744 to 755 (KEERKRHIERAR) has biased composition (basic and acidic residues).

In terms of assembly, interacts with Slo. In terms of tissue distribution, in embryos, it is expressed throughout the CNS and in several peripheral locations. Colocalizes with Slo.

In terms of biological role, may selectively reduce calcium-activated potassium channel (Slo) currents by reducing the number of Slo channels in the plasma membrane. The protein is Slo-interacting protein 1 (Slip1) of Drosophila melanogaster (Fruit fly).